A 402-amino-acid polypeptide reads, in one-letter code: Non-homologous end joining protein Ku (402 aa).

Residues 12 to 185 (ISFGLVTIPV…VAALTGIAQP (174 aa)) form the Ku domain. The interval 261 to 402 (QRAAGGATGG…GPDETAPGGP (142 aa)) is disordered. Low complexity-rich tracts occupy residues 299–308 (GDPAASVPGV) and 332–343 (VPGVPATAVPGT). Over residues 344–358 (PGAPVPTAPGVPSAP) the composition is skewed to pro residues. Low complexity predominate over residues 359 to 376 (APGTSPTSVPGVQTAPNG).

This sequence belongs to the prokaryotic Ku family. Homodimer. Interacts with LigD.

With LigD forms a non-homologous end joining (NHEJ) DNA repair enzyme, which repairs dsDNA breaks with reduced fidelity. Binds linear dsDNA with 5'- and 3'- overhangs but not closed circular dsDNA nor ssDNA. Recruits and stimulates the ligase activity of LigD. This is Non-homologous end joining protein Ku from Symbiobacterium thermophilum (strain DSM 24528 / JCM 14929 / IAM 14863 / T).